The chain runs to 60 residues: MDHRLLEIVACPVCNGKLYFNKENLELVCKADNLAYPVRDGIPVLLENEARPLSIDEKHA.

The protein belongs to the UPF0434 family.

This Yersinia enterocolitica serotype O:8 / biotype 1B (strain NCTC 13174 / 8081) protein is UPF0434 protein YE1549.